A 308-amino-acid polypeptide reads, in one-letter code: Small ribosomal subunit protein uS2 (308 aa).

Residue Ser-2 is modified to N-acetylserine. 2 laminin-binding regions span residues 161–180 (IPCNNKGPHSVGLMWWMLAR) and 205–229 (RDPEEIEKEEQAAAEKAVGKEEFQG). [DE]-W-[ST] repeat units lie at residues 230-232 (EWT), 245-247 (DWS), 279-281 (DWS), 288-290 (DWS), and 306-308 (DWS). A laminin-binding region spans residues 242 to 308 (EVADWSEGVQ…DWGGATADWS (67 aa)). Residues 262–308 (AGIEAPGKPAPAEVYAEDWSAQPATEDWSAAPTAQAGDWGGATADWS) are disordered.

Belongs to the universal ribosomal protein uS2 family. Monomer (37LRP) and homodimer (67LR). Component of the small ribosomal subunit. Mature ribosomes consist of a small (40S) and a large (60S) subunit. The 40S subunit contains about 33 different proteins and 1 molecule of RNA (18S). The 60S subunit contains about 49 different proteins and 3 molecules of RNA (28S, 5.8S and 5S). Interacts with rps21. Interacts with several laminins including at least lamb1. Interacts with mdk. Post-translationally, acylated. Acylation may be a prerequisite for conversion of the monomeric 37 kDa laminin receptor precursor (37LRP) to the mature dimeric 67 kDa laminin receptor (67LR), and may provide a mechanism for membrane association. In terms of processing, cleaved by stromelysin-3 (ST3) at the cell surface. Cleavage by stromelysin-3 may be a mechanism to alter cell-extracellular matrix interactions.

It is found in the cell membrane. Its subcellular location is the cytoplasm. The protein resides in the nucleus. In terms of biological role, required for the assembly and/or stability of the 40S ribosomal subunit. Required for the processing of the 20S rRNA-precursor to mature 18S rRNA in a late step of the maturation of 40S ribosomal subunits. Also functions as a cell surface receptor for laminin. Plays a role in cell adhesion to the basement membrane and in the consequent activation of signaling transduction pathways. May play a role in cell fate determination and tissue morphogenesis. The protein is Small ribosomal subunit protein uS2 (rpsa) of Danio rerio (Zebrafish).